The primary structure comprises 320 residues: Methionine import ATP-binding protein MetN (320 aa).

Residues 2–237 (IEIKNVSKYF…PSSEMKKLIG (236 aa)) form the ABC transporter domain. ATP is bound at residue 34–41 (GHSGAGKS).

Belongs to the ABC transporter superfamily. Methionine importer (TC 3.A.1.24) family. As to quaternary structure, the complex is composed of two ATP-binding proteins (MetN), two transmembrane proteins (MetI) and a solute-binding protein (MetQ).

Its subcellular location is the cell membrane. It carries out the reaction L-methionine(out) + ATP + H2O = L-methionine(in) + ADP + phosphate + H(+). The catalysed reaction is D-methionine(out) + ATP + H2O = D-methionine(in) + ADP + phosphate + H(+). Its function is as follows. Part of the ABC transporter complex MetNIQ involved in methionine import. Responsible for energy coupling to the transport system. The protein is Methionine import ATP-binding protein MetN of Clostridium acetobutylicum (strain ATCC 824 / DSM 792 / JCM 1419 / IAM 19013 / LMG 5710 / NBRC 13948 / NRRL B-527 / VKM B-1787 / 2291 / W).